The primary structure comprises 185 residues: Ribosome-recycling factor (185 aa).

It belongs to the RRF family.

The protein resides in the cytoplasm. Its function is as follows. Responsible for the release of ribosomes from messenger RNA at the termination of protein biosynthesis. May increase the efficiency of translation by recycling ribosomes from one round of translation to another. The polypeptide is Ribosome-recycling factor (Bacillus anthracis (strain A0248)).